A 214-amino-acid chain; its full sequence is Pyridoxine/pyridoxamine 5'-phosphate oxidase (214 aa).

Residues Arg-9–Tyr-12 and Lys-67 contribute to the substrate site. Residues Arg-62–Lys-67, Tyr-77–Thr-78, Arg-83, Lys-84, and Gln-106 each bind FMN. 3 residues coordinate substrate: Tyr-124, Arg-128, and Ser-132. Residues Gln-141 to Ser-142 and Trp-186 each bind FMN. Arg-192–His-194 is a substrate binding site. Arg-196 serves as a coordination point for FMN.

The protein belongs to the pyridoxamine 5'-phosphate oxidase family. As to quaternary structure, homodimer. It depends on FMN as a cofactor.

The catalysed reaction is pyridoxamine 5'-phosphate + O2 + H2O = pyridoxal 5'-phosphate + H2O2 + NH4(+). It carries out the reaction pyridoxine 5'-phosphate + O2 = pyridoxal 5'-phosphate + H2O2. It participates in cofactor metabolism; pyridoxal 5'-phosphate salvage; pyridoxal 5'-phosphate from pyridoxamine 5'-phosphate: step 1/1. The protein operates within cofactor metabolism; pyridoxal 5'-phosphate salvage; pyridoxal 5'-phosphate from pyridoxine 5'-phosphate: step 1/1. In terms of biological role, catalyzes the oxidation of either pyridoxine 5'-phosphate (PNP) or pyridoxamine 5'-phosphate (PMP) into pyridoxal 5'-phosphate (PLP). The polypeptide is Pyridoxine/pyridoxamine 5'-phosphate oxidase (Leptospira interrogans serogroup Icterohaemorrhagiae serovar copenhageni (strain Fiocruz L1-130)).